A 439-amino-acid polypeptide reads, in one-letter code: Ribosomal protein uS12 methylthiotransferase RimO (439 aa).

The region spanning 4–114 (PKVGFVSLGC…VVRAVHGVAP (111 aa)) is the MTTase N-terminal domain. [4Fe-4S] cluster-binding residues include Cys13, Cys49, Cys78, Cys147, Cys151, and Cys154. Residues 133-370 (LTPRHYAYLK…MEHQQAISTA (238 aa)) form the Radical SAM core domain. A TRAM domain is found at 373-439 (STRVGREIDV…EYDLWGERIA (67 aa)).

The protein belongs to the methylthiotransferase family. RimO subfamily. Requires [4Fe-4S] cluster as cofactor.

It localises to the cytoplasm. It carries out the reaction L-aspartate(89)-[ribosomal protein uS12]-hydrogen + (sulfur carrier)-SH + AH2 + 2 S-adenosyl-L-methionine = 3-methylsulfanyl-L-aspartate(89)-[ribosomal protein uS12]-hydrogen + (sulfur carrier)-H + 5'-deoxyadenosine + L-methionine + A + S-adenosyl-L-homocysteine + 2 H(+). Catalyzes the methylthiolation of an aspartic acid residue of ribosomal protein uS12. In Bordetella parapertussis (strain 12822 / ATCC BAA-587 / NCTC 13253), this protein is Ribosomal protein uS12 methylthiotransferase RimO.